The sequence spans 280 residues: NAD kinase (280 aa).

Catalysis depends on aspartate 60, which acts as the Proton acceptor. NAD(+) is bound by residues 60 to 61 (DG), 134 to 135 (ND), arginine 145, aspartate 164, 175 to 180 (TAYSLS), and glutamine 234.

The protein belongs to the NAD kinase family. A divalent metal cation serves as cofactor.

It localises to the cytoplasm. It carries out the reaction NAD(+) + ATP = ADP + NADP(+) + H(+). Functionally, involved in the regulation of the intracellular balance of NAD and NADP, and is a key enzyme in the biosynthesis of NADP. Catalyzes specifically the phosphorylation on 2'-hydroxyl of the adenosine moiety of NAD to yield NADP. In Carboxydothermus hydrogenoformans (strain ATCC BAA-161 / DSM 6008 / Z-2901), this protein is NAD kinase.